We begin with the raw amino-acid sequence, 195 residues long: Imidazoleglycerol-phosphate dehydratase (195 aa).

Belongs to the imidazoleglycerol-phosphate dehydratase family.

The protein resides in the cytoplasm. The enzyme catalyses D-erythro-1-(imidazol-4-yl)glycerol 3-phosphate = 3-(imidazol-4-yl)-2-oxopropyl phosphate + H2O. It participates in amino-acid biosynthesis; L-histidine biosynthesis; L-histidine from 5-phospho-alpha-D-ribose 1-diphosphate: step 6/9. The protein is Imidazoleglycerol-phosphate dehydratase of Geobacillus thermodenitrificans (strain NG80-2).